A 304-amino-acid polypeptide reads, in one-letter code: Galactofuranosyltransferase GlfT1 (304 aa).

This sequence belongs to the glycosyltransferase 2 family. As to quaternary structure, is probably part of an AG biosynthetic complex.

It is found in the cell membrane. Its subcellular location is the secreted. The protein localises to the cell wall. It carries out the reaction alpha-L-rhamnosyl-(1-&gt;3)-N-acetyl-alpha-D-glucosaminyl-diphospho-trans,octa-cis-decaprenol + 2 UDP-alpha-D-galactofuranose = beta-D-galactofuranosyl-(1-&gt;5)-beta-D-galactofuranosyl-(1-&gt;4)-alpha-L-rhamnosyl-(1-&gt;3)-N-acetyl-alpha-D-glucosaminyl-diphospho-trans,octa-cis-decaprenol + 2 UDP + 2 H(+). Its pathway is cell wall biogenesis; cell wall polysaccharide biosynthesis. Involved in the biosynthesis of the arabinogalactan (AG) region of the mycolylarabinogalactan-peptidoglycan (mAGP) complex, an essential component of the mycobacterial cell wall. Catalyzes the transfer of the first two galactofuranosyl (Galf) units from UDP-galactofuranose (UDP-Galf) onto the rhamnosyl-GlcNAc-diphospho-decaprenol (Rha-GlcNAc-PP-C50) acceptor, yielding galactofuranosyl-galactofuranosyl-rhamnosyl-GlcNAc-diphospho-decaprenol (Galf-Galf-Rha-GlcNAc-PP-C50). Thus, GlfT1 is the initiator of galactan synthesis, while GlfT2 continues with the subsequent polymerization events. This is Galactofuranosyltransferase GlfT1 from Mycobacterium tuberculosis (strain CDC 1551 / Oshkosh).